We begin with the raw amino-acid sequence, 577 residues long: Arginine--tRNA ligase (577 aa).

The short motif at 122–132 (PNVAKEMHVGH) is the 'HIGH' region element.

The protein belongs to the class-I aminoacyl-tRNA synthetase family. Monomer.

The protein resides in the cytoplasm. The catalysed reaction is tRNA(Arg) + L-arginine + ATP = L-arginyl-tRNA(Arg) + AMP + diphosphate. The protein is Arginine--tRNA ligase of Edwardsiella ictaluri (strain 93-146).